The sequence spans 191 residues: Putative NADH dehydrogenase/NAD(P)H nitroreductase (191 aa).

127-132 (AAHSLG) serves as a coordination point for NAD(+).

Belongs to the nitroreductase family. The cofactor is FMN.

In Methanothermobacter thermautotrophicus (strain ATCC 29096 / DSM 1053 / JCM 10044 / NBRC 100330 / Delta H) (Methanobacterium thermoautotrophicum), this protein is Putative NADH dehydrogenase/NAD(P)H nitroreductase.